We begin with the raw amino-acid sequence, 66 residues long: Beta-mammal toxin Cv1 (66 aa).

The LCN-type CS-alpha/beta domain occupies 1 to 66; sequence KEGYIVNLST…VWPLPKKTCN (66 aa). Disulfide bonds link C12-C65, C16-C41, C25-C46, and C29-C48.

Expressed by the venom gland.

The protein localises to the secreted. Its activity is regulated as follows. Is susceptible to be neutralized by human antibodies scFvs 10FG2 and HV. Functionally, beta toxins bind voltage-independently at site-4 of sodium channels (Nav) and reduces peak current and shifts the voltage of activation toward more negative potentials thereby affecting sodium channel activation and promoting spontaneous and repetitive firing. This toxin is slightly toxic to mice. In Centruroides villegasi (Scorpion), this protein is Beta-mammal toxin Cv1.